A 2514-amino-acid chain; its full sequence is Probable polyketide synthase 8/35 (2514 aa).

Residues 11-442 (DKGVAIVGVG…GSNCCLLISE (432 aa)) enclose the Ketosynthase family 3 (KS3) domain. Residues cysteine 181, histidine 323, and histidine 362 each act as for beta-ketoacyl synthase activity in the active site. The segment at 635–668 (GVNPSFILGHSLGEISAAYCSGMIDLDTFCYTVY) is acyl/malonyl transferase. Serine 645 serves as the catalytic For acyl/malonyl transferase activity. Residues 925 to 1047 (IDHLGLSNSY…ANFQLLDHGN (123 aa)) are N-terminal hotdog fold. In terms of domain architecture, PKS/mFAS DH spans 925 to 1209 (IDHLGLSNSY…FKSLIPIKHS (285 aa)). Histidine 959 acts as the Proton acceptor; for dehydratase activity in catalysis. Residues 1064–1209 (NLSKLTKNEL…FKSLIPIKHS (146 aa)) are C-terminal hotdog fold. Catalysis depends on aspartate 1122, which acts as the Proton donor; for dehydratase activity. In terms of domain architecture, Carrier spans 2431 to 2508 (IGNKNIDELF…ISIKMILNSL (78 aa)). Serine 2468 is modified (O-(pantetheine 4'-phosphoryl)serine).

Pantetheine 4'-phosphate serves as cofactor.

Its function is as follows. Probable polyketide synthase. This chain is Probable polyketide synthase 8/35 (pks8), found in Dictyostelium discoideum (Social amoeba).